The chain runs to 232 residues: Large ribosomal subunit protein uL1 (232 aa).

This sequence belongs to the universal ribosomal protein uL1 family. Part of the 50S ribosomal subunit.

Binds directly to 23S rRNA. The L1 stalk is quite mobile in the ribosome, and is involved in E site tRNA release. In terms of biological role, protein L1 is also a translational repressor protein, it controls the translation of the L11 operon by binding to its mRNA. This chain is Large ribosomal subunit protein uL1, found in Burkholderia vietnamiensis (strain G4 / LMG 22486) (Burkholderia cepacia (strain R1808)).